The following is a 65-amino-acid chain: Large ribosomal subunit protein bL33c (65 aa).

The protein belongs to the bacterial ribosomal protein bL33 family.

It is found in the plastid. It localises to the chloroplast. This Gracilaria tenuistipitata var. liui (Red alga) protein is Large ribosomal subunit protein bL33c.